A 102-amino-acid chain; its full sequence is Cytochrome c3 (102 aa).

Heme c contacts are provided by His-26, His-29, Cys-34, Cys-37, His-38, His-39, Cys-50, Cys-55, His-56, His-73, Cys-81, Cys-84, His-85, Cys-95, Cys-98, and His-99.

It depends on heme as a cofactor.

It localises to the periplasm. Functionally, participates in sulfate respiration coupled with phosphorylation by transferring electrons from the enzyme dehydrogenase to ferredoxin. The polypeptide is Cytochrome c3 (Desulfovibrio desulfuricans).